A 156-amino-acid chain; its full sequence is Small ribosomal subunit protein uS7 (156 aa).

This sequence belongs to the universal ribosomal protein uS7 family. In terms of assembly, part of the 30S ribosomal subunit. Contacts proteins S9 and S11.

In terms of biological role, one of the primary rRNA binding proteins, it binds directly to 16S rRNA where it nucleates assembly of the head domain of the 30S subunit. Is located at the subunit interface close to the decoding center, probably blocks exit of the E-site tRNA. This chain is Small ribosomal subunit protein uS7, found in Polynucleobacter necessarius subsp. necessarius (strain STIR1).